The following is a 149-amino-acid chain: Putative pre-16S rRNA nuclease (149 aa).

The protein belongs to the YqgF nuclease family.

The protein localises to the cytoplasm. Could be a nuclease involved in processing of the 5'-end of pre-16S rRNA. This chain is Putative pre-16S rRNA nuclease, found in Burkholderia lata (strain ATCC 17760 / DSM 23089 / LMG 22485 / NCIMB 9086 / R18194 / 383).